A 358-amino-acid polypeptide reads, in one-letter code: GMP reductase (358 aa).

Residues 26–27 (SR), Lys-78, 130–132 (DVA), and 181–182 (IG) each bind NADP(+). Residues Gly-182, Gly-184, and Cys-187 each coordinate K(+). The active-site Thioimidate intermediate is Cys-187. The active-site Proton donor/acceptor is Thr-189. K(+) is bound at residue Arg-190. GMP-binding positions include 220-222 (DGG), 243-244 (GG), 269-271 (GMS), and 287-291 (RASEG). Residues Met-270, 286–287 (YR), and 315–318 (SACT) contribute to the NADP(+) site.

This sequence belongs to the IMPDH/GMPR family. GuaC type 1 subfamily. As to quaternary structure, homotetramer.

The enzyme catalyses IMP + NH4(+) + NADP(+) = GMP + NADPH + 2 H(+). In terms of biological role, catalyzes the irreversible NADPH-dependent deamination of GMP to IMP. It functions in the conversion of nucleobase, nucleoside and nucleotide derivatives of G to A nucleotides, and in maintaining the intracellular balance of A and G nucleotides. The protein is GMP reductase of Caenorhabditis elegans.